The sequence spans 62 residues: Amolopin-p-MT1 (62 aa).

Positions 1–22 are cleaved as a signal peptide; the sequence is MFTLKKSLLLLFFLGTISLSLC. A propeptide spans 23–42 (removed in mature form); that stretch reads EQERGADEEENGGEVTEEEV.

The protein belongs to the frog skin active peptide (FSAP) family. Brevinin subfamily. In terms of tissue distribution, expressed by the skin glands.

It localises to the secreted. Antimicrobial peptide. Active against a variety of Gram-negative and Gram-positive bacterial strains. Not active against fungi. Shows weak hemolytic activity against human erythrocytes. The sequence is that of Amolopin-p-MT1 from Amolops mantzorum (Sichuan torrent frog).